The primary structure comprises 465 residues: UDP-N-acetylmuramate--L-alanine ligase (465 aa).

Residue Gly-125–Thr-131 coordinates ATP.

It belongs to the MurCDEF family.

Its subcellular location is the cytoplasm. The enzyme catalyses UDP-N-acetyl-alpha-D-muramate + L-alanine + ATP = UDP-N-acetyl-alpha-D-muramoyl-L-alanine + ADP + phosphate + H(+). Its pathway is cell wall biogenesis; peptidoglycan biosynthesis. In terms of biological role, cell wall formation. This Deinococcus geothermalis (strain DSM 11300 / CIP 105573 / AG-3a) protein is UDP-N-acetylmuramate--L-alanine ligase.